A 176-amino-acid chain; its full sequence is ATP-dependent protease subunit HslV (176 aa).

Thr-5 is a catalytic residue. Residues Ser-161, Cys-164, and Thr-167 each coordinate Na(+).

This sequence belongs to the peptidase T1B family. HslV subfamily. In terms of assembly, a double ring-shaped homohexamer of HslV is capped on each side by a ring-shaped HslU homohexamer. The assembly of the HslU/HslV complex is dependent on binding of ATP.

The protein localises to the cytoplasm. It carries out the reaction ATP-dependent cleavage of peptide bonds with broad specificity.. Allosterically activated by HslU binding. Protease subunit of a proteasome-like degradation complex believed to be a general protein degrading machinery. The sequence is that of ATP-dependent protease subunit HslV from Desulfitobacterium hafniense (strain Y51).